Consider the following 507-residue polypeptide: Histidine ammonia-lyase (507 aa).

The segment at residues 145–147 is a cross-link (5-imidazolinone (Ala-Gly)); sequence ASG. Ser146 is modified (2,3-didehydroalanine (Ser)).

The protein belongs to the PAL/histidase family. In terms of processing, contains an active site 4-methylidene-imidazol-5-one (MIO), which is formed autocatalytically by cyclization and dehydration of residues Ala-Ser-Gly.

The protein localises to the cytoplasm. The catalysed reaction is L-histidine = trans-urocanate + NH4(+). Its pathway is amino-acid degradation; L-histidine degradation into L-glutamate; N-formimidoyl-L-glutamate from L-histidine: step 1/3. The protein is Histidine ammonia-lyase of Treponema denticola (strain ATCC 35405 / DSM 14222 / CIP 103919 / JCM 8153 / KCTC 15104).